Reading from the N-terminus, the 332-residue chain is GTP 3',8-cyclase (332 aa).

Positions 9–220 (RFARKVDYLR…DQVRERIAER (212 aa)) constitute a Radical SAM core domain. Arg-18 is a GTP binding site. Cys-25 and Cys-29 together coordinate [4Fe-4S] cluster. S-adenosyl-L-methionine is bound at residue Tyr-31. Cys-32 is a [4Fe-4S] cluster binding site. Position 67 (Arg-67) interacts with GTP. Gly-71 serves as a coordination point for S-adenosyl-L-methionine. Thr-98 is a binding site for GTP. S-adenosyl-L-methionine is bound at residue Ser-122. Lys-159 contacts GTP. Met-193 is an S-adenosyl-L-methionine binding site. Residues Cys-258 and Cys-261 each contribute to the [4Fe-4S] cluster site. 263-265 (RVR) provides a ligand contact to GTP. Cys-275 provides a ligand contact to [4Fe-4S] cluster.

The protein belongs to the radical SAM superfamily. MoaA family. Monomer and homodimer. It depends on [4Fe-4S] cluster as a cofactor.

It carries out the reaction GTP + AH2 + S-adenosyl-L-methionine = (8S)-3',8-cyclo-7,8-dihydroguanosine 5'-triphosphate + 5'-deoxyadenosine + L-methionine + A + H(+). Its pathway is cofactor biosynthesis; molybdopterin biosynthesis. Its function is as follows. Catalyzes the cyclization of GTP to (8S)-3',8-cyclo-7,8-dihydroguanosine 5'-triphosphate. This Pseudomonas savastanoi pv. phaseolicola (strain 1448A / Race 6) (Pseudomonas syringae pv. phaseolicola (strain 1448A / Race 6)) protein is GTP 3',8-cyclase.